The following is a 119-amino-acid chain: Large ribosomal subunit protein uL18 (119 aa).

It belongs to the universal ribosomal protein uL18 family. As to quaternary structure, part of the 50S ribosomal subunit; part of the 5S rRNA/L5/L18/L25 subcomplex. Contacts the 5S and 23S rRNAs.

Functionally, this is one of the proteins that bind and probably mediate the attachment of the 5S RNA into the large ribosomal subunit, where it forms part of the central protuberance. The sequence is that of Large ribosomal subunit protein uL18 from Chlorobium phaeovibrioides (strain DSM 265 / 1930) (Prosthecochloris vibrioformis (strain DSM 265)).